The chain runs to 75 residues: UPF0270 protein PSPPH_1506 (75 aa).

Belongs to the UPF0270 family.

The polypeptide is UPF0270 protein PSPPH_1506 (Pseudomonas savastanoi pv. phaseolicola (strain 1448A / Race 6) (Pseudomonas syringae pv. phaseolicola (strain 1448A / Race 6))).